A 572-amino-acid polypeptide reads, in one-letter code: Phosphoglucomutase-1 (572 aa).

Substrate is bound by residues Thr-23, Arg-27, 120 to 121 (SH), and Lys-133. The active-site Phosphoserine intermediate is Ser-120. Residue Ser-120 coordinates Mg(2+). 3 residues coordinate Mg(2+): Asp-288, Asp-290, and Asp-292. Substrate contacts are provided by residues 292–293 (DR), Thr-356, 375–377 (EES), Lys-388, and Arg-524.

This sequence belongs to the phosphohexose mutase family. Mg(2+) is required as a cofactor.

It is found in the cytoplasm. The catalysed reaction is alpha-D-glucose 1-phosphate = alpha-D-glucose 6-phosphate. In terms of biological role, this enzyme participates in both the breakdown and synthesis of glucose. This chain is Phosphoglucomutase-1 (pgmA), found in Dictyostelium discoideum (Social amoeba).